We begin with the raw amino-acid sequence, 61 residues long: Large ribosomal subunit protein uL30 (61 aa).

This sequence belongs to the universal ribosomal protein uL30 family. As to quaternary structure, part of the 50S ribosomal subunit.

This chain is Large ribosomal subunit protein uL30, found in Marinomonas sp. (strain MWYL1).